Reading from the N-terminus, the 490-residue chain is Cytochrome P450 2C55 (490 aa).

Position 435 (cysteine 435) interacts with heme.

The protein belongs to the cytochrome P450 family. Heme is required as a cofactor.

It is found in the endoplasmic reticulum membrane. The protein resides in the microsome membrane. The enzyme catalyses an organic molecule + reduced [NADPH--hemoprotein reductase] + O2 = an alcohol + oxidized [NADPH--hemoprotein reductase] + H2O + H(+). Its function is as follows. Metabolizes arachidonic acid mainly to 19-hydroxyeicosatetraenoic acid (HETE). The polypeptide is Cytochrome P450 2C55 (Cyp2c55) (Rattus norvegicus (Rat)).